The chain runs to 467 residues: Histidine--tRNA ligase (467 aa).

It belongs to the class-II aminoacyl-tRNA synthetase family. As to quaternary structure, homodimer.

The protein resides in the cytoplasm. The enzyme catalyses tRNA(His) + L-histidine + ATP = L-histidyl-tRNA(His) + AMP + diphosphate + H(+). This Gloeobacter violaceus (strain ATCC 29082 / PCC 7421) protein is Histidine--tRNA ligase.